Here is a 360-residue protein sequence, read N- to C-terminus: DNA replication and repair protein RecF (360 aa).

An ATP-binding site is contributed by Gly33–Thr40.

Belongs to the RecF family.

Its subcellular location is the cytoplasm. Its function is as follows. The RecF protein is involved in DNA metabolism; it is required for DNA replication and normal SOS inducibility. RecF binds preferentially to single-stranded, linear DNA. It also seems to bind ATP. This chain is DNA replication and repair protein RecF, found in Rickettsia bellii (strain OSU 85-389).